A 337-amino-acid chain; its full sequence is Glutathione transferase 3 (337 aa).

Topologically, residues 1-239 (MPTKSTFSRW…NKYQYTLDFC (239 aa)) are cytoplasmic. A phosphoserine mark is found at S66, S72, S99, and S116. A disordered region spans residues 66-95 (SMTVDQSKDERNEYGSGSGNGSGSGSCDTA). Positions 107–132 (KEDDDEKPQSGDETSATKPLSSRNAN) are disordered. Polar residues predominate over residues 117–132 (GDETSATKPLSSRNAN). Residues 240 to 260 (LPILTWLLFFRGIPTLVSYYI) traverse the membrane as a helical segment. Topologically, residues 261 to 313 (NFIRYDLNIELDPMTFNLTKFLISLAIFKTCNNKNIDFHSFRCVNQLWTQLCT) are perinuclear space. Residues 314-336 (VNRSLGMVPLVFSMVSCLLTLYV) traverse the membrane as a helical segment. L337 is a topological domain (cytoplasmic).

Its subcellular location is the nucleus membrane. This chain is Glutathione transferase 3 (GTT3), found in Saccharomyces cerevisiae (strain ATCC 204508 / S288c) (Baker's yeast).